Consider the following 813-residue polypeptide: Sorting nexin-29 (813 aa).

An RUN domain is found at 36-180 (SDSDSRVTCL…ILFAINIDNK (145 aa)). Phosphoserine occurs at positions 268, 291, 292, 330, and 344. A disordered region spans residues 269–299 (FDDEEDEQNSGDVFKKTPGAGESSEDNSDRS). The span at 346 to 357 (DDEDVDENEDDV) shows a compositional bias: acidic residues. The tract at residues 346 to 378 (DDEDVDENEDDVYGNSSGRKHRGHSESPEKPLE) is disordered. 2 positions are modified to phosphoserine: Ser-445 and Ser-450. The stretch at 466–545 (TISELRQATV…VLKVQLKKYV (80 aa)) forms a coiled coil. Ser-639 carries the phosphoserine modification. Position 641 is a phosphothreonine (Thr-641). A phosphoserine mark is found at Ser-642 and Ser-646. Residues 656–779 (ALINVWIPSV…PFFVDITPPG (124 aa)) form the PX domain. The disordered stretch occupies residues 778–813 (PGEPVNSRPKAASRFPKLSRGQPRETRNVEPQSGDL).

Belongs to the sorting nexin family.

The protein is Sorting nexin-29 (SNX29) of Homo sapiens (Human).